Consider the following 540-residue polypeptide: Glucose-6-phosphate isomerase (540 aa).

Catalysis depends on glutamate 350, which acts as the Proton donor. Active-site residues include histidine 381 and lysine 503.

Belongs to the GPI family.

The protein resides in the cytoplasm. The enzyme catalyses alpha-D-glucose 6-phosphate = beta-D-fructose 6-phosphate. Its pathway is carbohydrate biosynthesis; gluconeogenesis. It participates in carbohydrate degradation; glycolysis; D-glyceraldehyde 3-phosphate and glycerone phosphate from D-glucose: step 2/4. Functionally, catalyzes the reversible isomerization of glucose-6-phosphate to fructose-6-phosphate. In Paraburkholderia xenovorans (strain LB400), this protein is Glucose-6-phosphate isomerase.